The chain runs to 73 residues: Large ribosomal subunit protein bL31 (73 aa).

Zn(2+) contacts are provided by C16, C18, C37, and C40.

Belongs to the bacterial ribosomal protein bL31 family. Type A subfamily. In terms of assembly, part of the 50S ribosomal subunit. The cofactor is Zn(2+).

In terms of biological role, binds the 23S rRNA. This is Large ribosomal subunit protein bL31 from Pseudomonas savastanoi pv. phaseolicola (strain 1448A / Race 6) (Pseudomonas syringae pv. phaseolicola (strain 1448A / Race 6)).